The following is a 215-amino-acid chain: Peroxiredoxin 1 (215 aa).

The region spanning 2–158 (VKLYSKFPDV…LLRITKAAIV (157 aa)) is the Thioredoxin domain. The active-site Cysteine sulfenic acid (-SOH) intermediate is cysteine 46. Arginine 121 serves as a coordination point for substrate.

This sequence belongs to the peroxiredoxin family. Prx6 subfamily. Homodecamer. Pentamer of dimers that assemble into a ring structure.

Its subcellular location is the cytoplasm. The enzyme catalyses a hydroperoxide + [thioredoxin]-dithiol = an alcohol + [thioredoxin]-disulfide + H2O. Its function is as follows. Thiol-specific peroxidase that catalyzes the reduction of hydrogen peroxide and organic hydroperoxides to water and alcohols, respectively. Plays a role in cell protection against oxidative stress by detoxifying peroxides. This is Peroxiredoxin 1 from Sulfurisphaera tokodaii (strain DSM 16993 / JCM 10545 / NBRC 100140 / 7) (Sulfolobus tokodaii).